The chain runs to 229 residues: Cytidylate kinase (229 aa).

G12–T20 is an ATP binding site.

Belongs to the cytidylate kinase family. Type 1 subfamily.

The protein localises to the cytoplasm. The enzyme catalyses CMP + ATP = CDP + ADP. It carries out the reaction dCMP + ATP = dCDP + ADP. The protein is Cytidylate kinase of Mesomycoplasma hyopneumoniae (strain 7448) (Mycoplasma hyopneumoniae).